The chain runs to 71 residues: Movement protein TGBp3 (71 aa).

Over 1 to 4 (MWSD) the chain is Lumenal. The helical transmembrane segment at 5–27 (SLVSRICVPIIVVCTSIALLNVV) threads the bilayer. Topologically, residues 28–71 (SFRSECSCVVHISGAAIDIRGCSFTPDFIEYAKTLRVFNHRYQE) are cytoplasmic.

It belongs to the Tymovirales TGBp3 protein family.

It is found in the host endoplasmic reticulum membrane. Its function is as follows. Plays a role in viral cell-to-cell propagation, by facilitating genome transport to neighboring plant cells through plasmosdesmata. May induce the formation of granular vesicles derived from the Endoplasmic reticulum, which align on actin filaments. The chain is Movement protein TGBp3 from Populus balsamifera (Balsam poplar).